The chain runs to 240 residues: MSSVNKNELEKFEKISHSWWNKDGEFGILHRINPIRLNYIIEKIKSHYNDISDLEILDVGCGGGLIATNLTMQGFNVTAIDALQSNIDTALAYATENNIKVNYLKSTIEELENDKQYDVVICLEVIEHVENVQEFMLNLVKRIKPKGIAIISTINRTKKAYLLGIIAAEYILGWVPKNTHDYSKFLKPSEIYEMLENTNIEIEELKGLVYNMAEDKWVLSDDDIDVNYFVYLKKNVLGVI.

S-adenosyl-L-methionine is bound by residues Arg36, Gly60, Asp81, and Leu123.

Belongs to the methyltransferase superfamily. UbiG/COQ3 family.

It catalyses the reaction a 3-demethylubiquinol + S-adenosyl-L-methionine = a ubiquinol + S-adenosyl-L-homocysteine + H(+). The enzyme catalyses a 3-(all-trans-polyprenyl)benzene-1,2-diol + S-adenosyl-L-methionine = a 2-methoxy-6-(all-trans-polyprenyl)phenol + S-adenosyl-L-homocysteine + H(+). It functions in the pathway cofactor biosynthesis; ubiquinone biosynthesis. O-methyltransferase that catalyzes the 2 O-methylation steps in the ubiquinone biosynthetic pathway. The polypeptide is Ubiquinone biosynthesis O-methyltransferase (Rickettsia bellii (strain OSU 85-389)).